We begin with the raw amino-acid sequence, 195 residues long: Putative CheY-P phosphatase CheC1 (195 aa).

This sequence belongs to the CheC family.

Its function is as follows. Catalyzes the dephosphorylation of CheY-P. The polypeptide is Putative CheY-P phosphatase CheC1 (cheC1) (Halobacterium salinarum (strain ATCC 29341 / DSM 671 / R1)).